Here is a 243-residue protein sequence, read N- to C-terminus: Alanyl-tRNA editing protein AlaX-M (243 aa).

Residues histidine 105, histidine 109, cysteine 208, and histidine 212 each contribute to the Zn(2+) site.

It belongs to the class-II aminoacyl-tRNA synthetase family. Editing domain AlaX-M subfamily. Requires Zn(2+) as cofactor.

Its subcellular location is the cytoplasm. Its function is as follows. Functions in trans to edit the amino acid moiety from incorrectly charged Ser-tRNA(Ala) or Gly-tRNA(Ala). Has no activity on incorrectly charged Ser-tRNA(Thr), nor on correctly charged Ala-tRNA(Ala) or Ser-tRNA(Ser). The sequence is that of Alanyl-tRNA editing protein AlaX-M (alaXM) from Methanosarcina barkeri (strain Fusaro / DSM 804).